The following is a 302-amino-acid chain: MAGRELSHLQQLEAESIQIIREVAAEFDNPVMLYSIGKDSSVMLHLARKAFYPGKIPFPLLHVDTGWKFKEMIAFRDAQAKKFGFELLAHINPEGLAQGINPFDHGSAKHTDIMKTQGLKQALNQYGFDAAFGGARRDEEKSRAKERVYSFRDRHHRWDPKNQRPELWRTYNGAVNKGESIRVFPLSNWTELDIWQYIYQENIELVPLYFAAKRQVVERGGQLIMADDERMKLAEGEQFKEELVRFRTLGCYPLTAAMHSEADSLEKIIEEMLLTRSSERQGRLIDSDQSASMEQKKRQGYF.

The disordered stretch occupies residues 280–302 (RQGRLIDSDQSASMEQKKRQGYF).

It belongs to the PAPS reductase family. CysD subfamily. In terms of assembly, heterodimer composed of CysD, the smaller subunit, and CysN.

It catalyses the reaction sulfate + ATP + H(+) = adenosine 5'-phosphosulfate + diphosphate. Its pathway is sulfur metabolism; hydrogen sulfide biosynthesis; sulfite from sulfate: step 1/3. With CysN forms the ATP sulfurylase (ATPS) that catalyzes the adenylation of sulfate producing adenosine 5'-phosphosulfate (APS) and diphosphate, the first enzymatic step in sulfur assimilation pathway. APS synthesis involves the formation of a high-energy phosphoric-sulfuric acid anhydride bond driven by GTP hydrolysis by CysN coupled to ATP hydrolysis by CysD. The chain is Sulfate adenylyltransferase subunit 2 from Shewanella baltica (strain OS185).